The sequence spans 153 residues: Sperm surface protein Sp17 (153 aa).

A disordered region spans residues 74 to 117 (FKVPSGATESKEAPPEKSEPEKETPQEVVKEQETQVSFVEEVST). Over residues 82–106 (ESKEAPPEKSEPEKETPQEVVKEQE) the composition is skewed to basic and acidic residues. Positions 122-151 (AAAAAVKIQAAFRGHKARKEVKIMKESSIE) constitute an IQ domain.

In terms of assembly, homodimer. May interact with ROPN1. Testis- and sperm-specific.

Its subcellular location is the membrane. In terms of biological role, sperm surface zona pellucida binding protein. Helps to bind spermatozoa to the zona pellucida with high affinity. Might function in binding zona pellucida and carbohydrates. This chain is Sperm surface protein Sp17 (SPA17), found in Notamacropus eugenii (Tammar wallaby).